A 159-amino-acid polypeptide reads, in one-letter code: SsrA-binding protein (159 aa).

The interval 134–159 is disordered; it reads KLHDKRETSKERDWNRQKNRLLKERG. The span at 137–159 shows a compositional bias: basic and acidic residues; it reads DKRETSKERDWNRQKNRLLKERG.

Belongs to the SmpB family.

It is found in the cytoplasm. Its function is as follows. Required for rescue of stalled ribosomes mediated by trans-translation. Binds to transfer-messenger RNA (tmRNA), required for stable association of tmRNA with ribosomes. tmRNA and SmpB together mimic tRNA shape, replacing the anticodon stem-loop with SmpB. tmRNA is encoded by the ssrA gene; the 2 termini fold to resemble tRNA(Ala) and it encodes a 'tag peptide', a short internal open reading frame. During trans-translation Ala-aminoacylated tmRNA acts like a tRNA, entering the A-site of stalled ribosomes, displacing the stalled mRNA. The ribosome then switches to translate the ORF on the tmRNA; the nascent peptide is terminated with the 'tag peptide' encoded by the tmRNA and targeted for degradation. The ribosome is freed to recommence translation, which seems to be the essential function of trans-translation. The chain is SsrA-binding protein from Rhizobium meliloti (strain 1021) (Ensifer meliloti).